A 303-amino-acid polypeptide reads, in one-letter code: D-alanine--D-alanine ligase (303 aa).

The ATP-grasp domain occupies 100 to 295 (KQLLRRHGIL…FPALIARLIE (196 aa)). Residue 127–180 (GLGYPLFVKPNTGGSSLCLSRVTQPEGLAPALEAVFAHCGEAIVEPAIPGVEVT) coordinates ATP. Residues D249, E262, and N264 each coordinate Mg(2+).

Belongs to the D-alanine--D-alanine ligase family. Mg(2+) serves as cofactor. Requires Mn(2+) as cofactor.

The protein localises to the cytoplasm. The enzyme catalyses 2 D-alanine + ATP = D-alanyl-D-alanine + ADP + phosphate + H(+). The protein operates within cell wall biogenesis; peptidoglycan biosynthesis. Its function is as follows. Cell wall formation. The polypeptide is D-alanine--D-alanine ligase (Nitratidesulfovibrio vulgaris (strain DP4) (Desulfovibrio vulgaris)).